The primary structure comprises 493 residues: Glutamyl-tRNA(Gln) amidotransferase subunit A (493 aa).

Active-site charge relay system residues include lysine 79 and serine 159. The Acyl-ester intermediate role is filled by serine 183.

The protein belongs to the amidase family. GatA subfamily. In terms of assembly, heterotrimer of A, B and C subunits.

It catalyses the reaction L-glutamyl-tRNA(Gln) + L-glutamine + ATP + H2O = L-glutaminyl-tRNA(Gln) + L-glutamate + ADP + phosphate + H(+). Its function is as follows. Allows the formation of correctly charged Gln-tRNA(Gln) through the transamidation of misacylated Glu-tRNA(Gln) in organisms which lack glutaminyl-tRNA synthetase. The reaction takes place in the presence of glutamine and ATP through an activated gamma-phospho-Glu-tRNA(Gln). This Brucella abortus (strain S19) protein is Glutamyl-tRNA(Gln) amidotransferase subunit A.